The chain runs to 514 residues: Probable lipid II flippase MurJ (514 aa).

The next 14 helical transmembrane spans lie at 3–23 (ILKS…FGFF), 25–45 (DVLI…FIAF), 92–112 (ILVL…IIFI), 130–150 (LLKI…CSSI), 157–177 (FFIP…FSFF), 186–206 (IISL…YQFP), 245–265 (ISLI…ISWI), 271–291 (LIEF…FTSF), 315–335 (LILS…LVII), 354–374 (LELY…VSAF), 386–406 (ISIL…FYFQ), 409–429 (GLAL…YWKL), 448–468 (LLIA…FIPS), and 481–501 (LFTI…FLGI).

The protein belongs to the MurJ/MviN family.

It localises to the cell inner membrane. It participates in cell wall biogenesis; peptidoglycan biosynthesis. In terms of biological role, involved in peptidoglycan biosynthesis. Transports lipid-linked peptidoglycan precursors from the inner to the outer leaflet of the cytoplasmic membrane. The sequence is that of Probable lipid II flippase MurJ from Buchnera aphidicola subsp. Schizaphis graminum (strain Sg).